Reading from the N-terminus, the 494-residue chain is Transcription termination factor MTERF4, chloroplastic (494 aa).

The N-terminal 54 residues, 1–54, are a transit peptide targeting the chloroplast; it reads MMKSLLFSAHPTSLLLPAPRLRRLLRLRAASSASASAPPRADRRSPGTPSRRPS. Disordered stretches follow at residues 32–61 and 457–494; these read SASA…YARP and VEEM…EFVR. The span at 46–56 shows a compositional bias: low complexity; that stretch reads PGTPSRRPSSS. 2 stretches are compositionally biased toward acidic residues: residues 457 to 466 and 473 to 494; these read VEEMEREDSS and DEVE…EFVR.

The protein belongs to the mTERF family.

It is found in the plastid. The protein resides in the chloroplast stroma. In terms of biological role, transcription termination factor required for processing and steady-state levels of plastid transcripts. Required for splicing of the chloroplastic group II intron. Required for the accumulation of 16S and 23S ribosomes. This is Transcription termination factor MTERF4, chloroplastic from Zea mays (Maize).